Consider the following 340-residue polypeptide: Ketol-acid reductoisomerase (NADP(+)) (340 aa).

The region spanning 3–183 (INVFYDKDCN…GGGRTGIIET (181 aa)) is the KARI N-terminal Rossmann domain. NADP(+)-binding positions include 26–29 (FGSQ), Arg-49, Ser-54, and 84–87 (DENQ). Residue His-109 is part of the active site. Position 135 (Gly-135) interacts with NADP(+). The KARI C-terminal knotted domain occupies 184 to 329 (TFKDETETDL…VKLRNMMPWI (146 aa)). Mg(2+)-binding residues include Asp-192, Glu-196, Glu-228, and Glu-232. Ser-253 contacts substrate.

The protein belongs to the ketol-acid reductoisomerase family. The cofactor is Mg(2+).

It catalyses the reaction (2R)-2,3-dihydroxy-3-methylbutanoate + NADP(+) = (2S)-2-acetolactate + NADPH + H(+). The enzyme catalyses (2R,3R)-2,3-dihydroxy-3-methylpentanoate + NADP(+) = (S)-2-ethyl-2-hydroxy-3-oxobutanoate + NADPH + H(+). It functions in the pathway amino-acid biosynthesis; L-isoleucine biosynthesis; L-isoleucine from 2-oxobutanoate: step 2/4. It participates in amino-acid biosynthesis; L-valine biosynthesis; L-valine from pyruvate: step 2/4. Involved in the biosynthesis of branched-chain amino acids (BCAA). Catalyzes an alkyl-migration followed by a ketol-acid reduction of (S)-2-acetolactate (S2AL) to yield (R)-2,3-dihydroxy-isovalerate. In the isomerase reaction, S2AL is rearranged via a Mg-dependent methyl migration to produce 3-hydroxy-3-methyl-2-ketobutyrate (HMKB). In the reductase reaction, this 2-ketoacid undergoes a metal-dependent reduction by NADPH to yield (R)-2,3-dihydroxy-isovalerate. The protein is Ketol-acid reductoisomerase (NADP(+)) of Aliarcobacter butzleri (strain RM4018) (Arcobacter butzleri).